The primary structure comprises 179 residues: Inorganic pyrophosphatase (179 aa).

Positions 30, 44, and 56 each coordinate substrate. Mg(2+) is bound by residues aspartate 66, aspartate 71, and aspartate 103. Tyrosine 142 lines the substrate pocket.

It belongs to the PPase family. As to quaternary structure, homohexamer. It depends on Mg(2+) as a cofactor.

The protein resides in the cytoplasm. The enzyme catalyses diphosphate + H2O = 2 phosphate + H(+). Functionally, catalyzes the hydrolysis of inorganic pyrophosphate (PPi) forming two phosphate ions. The chain is Inorganic pyrophosphatase from Rhodospirillum rubrum (strain ATCC 11170 / ATH 1.1.1 / DSM 467 / LMG 4362 / NCIMB 8255 / S1).